A 119-amino-acid chain; its full sequence is Large ribosomal subunit protein uL22c (119 aa).

The protein belongs to the universal ribosomal protein uL22 family. Part of the 50S ribosomal subunit.

The protein localises to the plastid. It localises to the chloroplast. Its function is as follows. This protein binds specifically to 23S rRNA. The globular domain of the protein is located near the polypeptide exit tunnel on the outside of the subunit, while an extended beta-hairpin is found that lines the wall of the exit tunnel in the center of the 70S ribosome. The sequence is that of Large ribosomal subunit protein uL22c (rpl22) from Mesostigma viride (Green alga).